Here is a 137-residue protein sequence, read N- to C-terminus: Thionin-like protein 1 (137 aa).

The N-terminal stretch at 1–23 (MEDKRVAMLVVMMLVMGNMLIEA) is a signal peptide.

This sequence belongs to the plant thionin (TC 1.C.44) family. Post-translationally, is disulfide-linked.

The protein resides in the secreted. Functionally, may be involved in plant defense. The protein is Thionin-like protein 1 of Arabidopsis thaliana (Mouse-ear cress).